A 183-amino-acid polypeptide reads, in one-letter code: uncharacterized protein (183 aa).

The span at 105 to 149 (YNTNNSNTNTNYNNNNNNNNNNNNNNNNNNNKNNNNNNNNNNSNS) shows a compositional bias: low complexity. The segment at 105–151 (YNTNNSNTNTNYNNNNNNNNNNNNNNNNNNNKNNNNNNNNNNSNSKI) is disordered.

This is an uncharacterized protein from Dictyostelium discoideum (Social amoeba).